The following is a 210-amino-acid chain: Helix-loop-helix protein 26 (210 aa).

Residues 1–15 are compositionally biased toward low complexity; the sequence is MSSSPTSSSSGSPSS. Residues 1-33 are disordered; sequence MSSSPTSSSSGSPSSHGHRSETEKQRRDDTNDL. Residues 14 to 65 form the bHLH domain; it reads SSHGHRSETEKQRRDDTNDLLNEFKKIVQKSESEKLSKEEVLFRIVKLLSGI. Positions 18–33 are enriched in basic and acidic residues; that stretch reads HRSETEKQRRDDTNDL.

As to quaternary structure, homodimer; binds to DNA as a homodimer. In terms of tissue distribution, expressed in intestinal cells (at protein level).

The protein localises to the nucleus. As a homodimer binds DNA via the E-box sequence 5'-CACGTG-3'. Represses lag-2 transcription during embryogenesis via Notch signaling, in an unc-37-dependent manner. Also represses tbx-37 independent of Notch signaling. In the intestine, plays a role in probiotic-mediated protection against infections by pathogens such as S.enterica. This is most likely by positively regulating the expression of genes such as bar-1 upon exposure to probiotic bacteria such as the E.faecium. The protein is Helix-loop-helix protein 26 of Caenorhabditis elegans.